The sequence spans 108 residues: T cell receptor alpha variable 1-1 (108 aa).

Positions 1–18 (MWGAFLLYVSMKMGGTAG) are cleaved as a signal peptide. Residues 19-108 (QSLEQPSEVT…DSASYFCAVR (90 aa)) enclose the Ig-like domain. An N-linked (GlcNAc...) asparagine glycan is attached at Asn-38. Cys-39 and Cys-105 are disulfide-bonded.

Alpha-beta TR is a heterodimer composed of an alpha and beta chain; disulfide-linked. The alpha-beta TR is associated with the transmembrane signaling CD3 coreceptor proteins to form the TR-CD3 (TcR or TCR). The assembly of alpha-beta TR heterodimers with CD3 occurs in the endoplasmic reticulum where a single alpha-beta TR heterodimer associates with one CD3D-CD3E heterodimer, one CD3G-CD3E heterodimer and one CD247 homodimer forming a stable octameric structure. CD3D-CD3E and CD3G-CD3E heterodimers preferentially associate with TR alpha and TR beta chains, respectively. The association of the CD247 homodimer is the last step of TcR assembly in the endoplasmic reticulum and is required for transport to the cell surface.

The protein resides in the cell membrane. In terms of biological role, v region of the variable domain of T cell receptor (TR) alpha chain that participates in the antigen recognition. Alpha-beta T cell receptors are antigen specific receptors which are essential to the immune response and are present on the cell surface of T lymphocytes. Recognize peptide-major histocompatibility (MH) (pMH) complexes that are displayed by antigen presenting cells (APC), a prerequisite for efficient T cell adaptive immunity against pathogens. Binding of alpha-beta TR to pMH complex initiates TR-CD3 clustering on the cell surface and intracellular activation of LCK that phosphorylates the ITAM motifs of CD3G, CD3D, CD3E and CD247 enabling the recruitment of ZAP70. In turn ZAP70 phosphorylates LAT, which recruits numerous signaling molecules to form the LAT signalosome. The LAT signalosome propagates signal branching to three major signaling pathways, the calcium, the mitogen-activated protein kinase (MAPK) kinase and the nuclear factor NF-kappa-B (NF-kB) pathways, leading to the mobilization of transcription factors that are critical for gene expression and essential for T cell growth and differentiation. The T cell repertoire is generated in the thymus, by V-(D)-J rearrangement. This repertoire is then shaped by intrathymic selection events to generate a peripheral T cell pool of self-MH restricted, non-autoaggressive T cells. Post-thymic interaction of alpha-beta TR with the pMH complexes shapes TR structural and functional avidity. In Homo sapiens (Human), this protein is T cell receptor alpha variable 1-1.